The sequence spans 376 residues: Protein STRICTOSIDINE SYNTHASE-LIKE 2 (376 aa).

The N-terminal stretch at 1–23 (MMKLLLVVATSVALIFSVTDLSG) is a signal peptide. N-linked (GlcNAc...) asparagine glycosylation is found at N79 and N244.

Belongs to the strictosidine synthase family.

The protein localises to the vacuole. This Arabidopsis thaliana (Mouse-ear cress) protein is Protein STRICTOSIDINE SYNTHASE-LIKE 2.